Consider the following 243-residue polypeptide: 2-C-methyl-D-erythritol 4-phosphate cytidylyltransferase (243 aa).

This sequence belongs to the IspD/TarI cytidylyltransferase family. IspD subfamily.

It catalyses the reaction 2-C-methyl-D-erythritol 4-phosphate + CTP + H(+) = 4-CDP-2-C-methyl-D-erythritol + diphosphate. Its pathway is isoprenoid biosynthesis; isopentenyl diphosphate biosynthesis via DXP pathway; isopentenyl diphosphate from 1-deoxy-D-xylulose 5-phosphate: step 2/6. In terms of biological role, catalyzes the formation of 4-diphosphocytidyl-2-C-methyl-D-erythritol from CTP and 2-C-methyl-D-erythritol 4-phosphate (MEP). This is 2-C-methyl-D-erythritol 4-phosphate cytidylyltransferase from Pelodictyon phaeoclathratiforme (strain DSM 5477 / BU-1).